The primary structure comprises 373 residues: Trifolitoxin-processing protein TfxB (373 aa).

It to E.coli McbC which is involved in the processing of microcin B17 (MCCB17).

It is found in the cytoplasm. The actions of the proteins TfxB, TfxD and TfxF are implicated in the processing of the inactive trifolitoxin (TfxA) precursor into the active peptide. The polypeptide is Trifolitoxin-processing protein TfxB (tfxB) (Rhizobium leguminosarum bv. trifolii).